The primary structure comprises 137 residues: Large ribosomal subunit protein uL16 (137 aa).

The protein belongs to the universal ribosomal protein uL16 family. As to quaternary structure, part of the 50S ribosomal subunit.

Binds 23S rRNA and is also seen to make contacts with the A and possibly P site tRNAs. In Agrobacterium fabrum (strain C58 / ATCC 33970) (Agrobacterium tumefaciens (strain C58)), this protein is Large ribosomal subunit protein uL16.